A 400-amino-acid polypeptide reads, in one-letter code: CCA-adding enzyme (400 aa).

The ATP site is built by Gly-27 and Arg-30. CTP contacts are provided by Gly-27 and Arg-30. Mg(2+) contacts are provided by Asp-40 and Asp-42. Positions 111, 154, 157, 160, and 163 each coordinate ATP. Residues Arg-111, Asp-154, Arg-157, Arg-160, and Arg-163 each contribute to the CTP site.

It belongs to the tRNA nucleotidyltransferase/poly(A) polymerase family. Bacterial CCA-adding enzyme type 3 subfamily. Homodimer. It depends on Mg(2+) as a cofactor.

It carries out the reaction a tRNA precursor + 2 CTP + ATP = a tRNA with a 3' CCA end + 3 diphosphate. It catalyses the reaction a tRNA with a 3' CCA end + 2 CTP + ATP = a tRNA with a 3' CCACCA end + 3 diphosphate. In terms of biological role, catalyzes the addition and repair of the essential 3'-terminal CCA sequence in tRNAs without using a nucleic acid template. Adds these three nucleotides in the order of C, C, and A to the tRNA nucleotide-73, using CTP and ATP as substrates and producing inorganic pyrophosphate. tRNA 3'-terminal CCA addition is required both for tRNA processing and repair. Also involved in tRNA surveillance by mediating tandem CCA addition to generate a CCACCA at the 3' terminus of unstable tRNAs. While stable tRNAs receive only 3'-terminal CCA, unstable tRNAs are marked with CCACCA and rapidly degraded. This Bacillus pumilus (strain SAFR-032) protein is CCA-adding enzyme.